Reading from the N-terminus, the 274-residue chain is Cytochrome b-c1 complex subunit Rieske, mitochondrial (274 aa).

The Mitochondrial matrix portion of the chain corresponds to 79–103 (SHTDIKVPDFSDYRRPEVLDSTKSS). The chain crosses the membrane as a helical span at residues 104 to 140 (KESSEARKGFSYLVTATTTVGVAYAAKNVVSQFVSSM). Residues 141-274 (SASADVLAMS…FTSDDMVIVG (134 aa)) lie on the Mitochondrial intermembrane side of the membrane. The region spanning 187 to 272 (EAAVEVSQLR…YEFTSDDMVI (86 aa)) is the Rieske domain. [2Fe-2S] cluster contacts are provided by cysteine 217, histidine 219, cysteine 236, histidine 239, and serine 241. A disulfide bond links cysteine 222 and cysteine 238.

This sequence belongs to the Rieske iron-sulfur protein family. Component of the ubiquinol-cytochrome c oxidoreductase (cytochrome b-c1 complex, complex III, CIII), a multisubunit enzyme composed of 11 subunits. The complex is composed of 3 respiratory subunits cytochrome b, cytochrome c1 and Rieske protein UQCRFS1, 2 core protein subunits UQCRC1/QCR1 and UQCRC2/QCR2, and 6 low-molecular weight protein subunits UQCRH/QCR6, UQCRB/QCR7, UQCRQ/QCR8, UQCR10/QCR9, UQCR11/QCR10 and subunit 9, the cleavage product of Rieske protein UQCRFS1. The complex exists as an obligatory dimer and forms supercomplexes (SCs) in the inner mitochondrial membrane with NADH-ubiquinone oxidoreductase (complex I, CI) and cytochrome c oxidase (complex IV, CIV), resulting in different assemblies (supercomplex SCI(1)III(2)IV(1) and megacomplex MCI(2)III(2)IV(2)). Incorporation of the Rieske protein UQCRFS1 is the penultimate step in complex III assembly. Interacts with TTC19, which is involved in the clearance of UQCRFS1 fragments. As to quaternary structure, component of the ubiquinol-cytochrome c oxidoreductase (cytochrome b-c1 complex, complex III, CIII). Subunit 9 corresponds to the mitochondrial targeting sequence (MTS) of Rieske protein UQCRFS1. It is retained after processing and incorporated inside complex III, where it remains bound to the complex and localizes between the 2 core subunits UQCRC1/QCR1 and UQCRC2/QCR2. Requires [2Fe-2S] cluster as cofactor. In terms of processing, proteolytic processing is necessary for the correct insertion of UQCRFS1 in the complex III dimer. Several fragments are generated during UQCRFS1 insertion, most probably due to the endogenous matrix-processing peptidase (MPP) activity of the 2 core protein subunits UQCRC1/QCR1 and UQCRC2/QCR2, which are homologous to the 2 mitochondrial-processing peptidase (MPP) subunits beta-MPP and alpha-MPP respectively. The action of the protease is also necessary for the clearance of the UQCRFS1 fragments.

It localises to the mitochondrion inner membrane. It carries out the reaction a quinol + 2 Fe(III)-[cytochrome c](out) = a quinone + 2 Fe(II)-[cytochrome c](out) + 2 H(+)(out). Functionally, component of the ubiquinol-cytochrome c oxidoreductase, a multisubunit transmembrane complex that is part of the mitochondrial electron transport chain which drives oxidative phosphorylation. The respiratory chain contains 3 multisubunit complexes succinate dehydrogenase (complex II, CII), ubiquinol-cytochrome c oxidoreductase (cytochrome b-c1 complex, complex III, CIII) and cytochrome c oxidase (complex IV, CIV), that cooperate to transfer electrons derived from NADH and succinate to molecular oxygen, creating an electrochemical gradient over the inner membrane that drives transmembrane transport and the ATP synthase. The cytochrome b-c1 complex catalyzes electron transfer from ubiquinol to cytochrome c, linking this redox reaction to translocation of protons across the mitochondrial inner membrane, with protons being carried across the membrane as hydrogens on the quinol. In the process called Q cycle, 2 protons are consumed from the matrix, 4 protons are released into the intermembrane space and 2 electrons are passed to cytochrome c. The Rieske protein is a catalytic core subunit containing a [2Fe-2S] iron-sulfur cluster. It cycles between 2 conformational states during catalysis to transfer electrons from the quinol bound in the Q(0) site in cytochrome b to cytochrome c1. Incorporation of UQCRFS1 is the penultimate step in complex III assembly. In terms of biological role, component of the ubiquinol-cytochrome c oxidoreductase (cytochrome b-c1 complex, complex III, CIII). UQCRFS1 undergoes proteolytic processing once it is incorporated in the complex III dimer. One of the fragments, called subunit 9, corresponds to its mitochondrial targeting sequence (MTS). The proteolytic processing is necessary for the correct insertion of UQCRFS1 in the complex III dimer, but the persistence of UQCRFS1-derived fragments may prevent newly imported UQCRFS1 to be processed and assembled into complex III and is detrimental for the complex III structure and function. This Bos taurus (Bovine) protein is Cytochrome b-c1 complex subunit Rieske, mitochondrial (UQCRFS1).